A 569-amino-acid polypeptide reads, in one-letter code: Proline--tRNA ligase (569 aa).

It belongs to the class-II aminoacyl-tRNA synthetase family. ProS type 1 subfamily. In terms of assembly, homodimer.

The protein resides in the cytoplasm. It carries out the reaction tRNA(Pro) + L-proline + ATP = L-prolyl-tRNA(Pro) + AMP + diphosphate. Functionally, catalyzes the attachment of proline to tRNA(Pro) in a two-step reaction: proline is first activated by ATP to form Pro-AMP and then transferred to the acceptor end of tRNA(Pro). As ProRS can inadvertently accommodate and process non-cognate amino acids such as alanine and cysteine, to avoid such errors it has two additional distinct editing activities against alanine. One activity is designated as 'pretransfer' editing and involves the tRNA(Pro)-independent hydrolysis of activated Ala-AMP. The other activity is designated 'posttransfer' editing and involves deacylation of mischarged Ala-tRNA(Pro). The misacylated Cys-tRNA(Pro) is not edited by ProRS. This Campylobacter jejuni subsp. jejuni serotype O:2 (strain ATCC 700819 / NCTC 11168) protein is Proline--tRNA ligase.